A 291-amino-acid polypeptide reads, in one-letter code: Pyridoxal kinase PdxY (291 aa).

Residues Ser9 and 44-45 (TQ) each bind substrate. Residues Asp112, Val144, Glu149, Lys182, and 207-210 (RPHL) contribute to the ATP site. Asp221 is a substrate binding site.

It belongs to the pyridoxine kinase family. PdxY subfamily. Homodimer. It depends on Mg(2+) as a cofactor.

It carries out the reaction pyridoxal + ATP = pyridoxal 5'-phosphate + ADP + H(+). It functions in the pathway cofactor metabolism; pyridoxal 5'-phosphate salvage; pyridoxal 5'-phosphate from pyridoxal: step 1/1. Pyridoxal kinase involved in the salvage pathway of pyridoxal 5'-phosphate (PLP). Catalyzes the phosphorylation of pyridoxal to PLP. In Photobacterium profundum (strain SS9), this protein is Pyridoxal kinase PdxY.